The following is a 640-amino-acid chain: Telomere repeat-binding protein 4 (640 aa).

The 80-residue stretch at 343-422 (VKFSIKSLRI…LGNLGFTLEP (80 aa)) folds into the Ubiquitin-like domain. Residues 442–464 (TDSTKLSERSAASPALETGIPLP) form a disordered region. Positions 530–589 (SQRRTRRPFSVTEVEALVSAVEEVGTGRWRDVKLRSFENASHRTYVDLKDKWKTLVHTAS) constitute an HTH myb-type domain. The segment at residues 558-585 (WRDVKLRSFENASHRTYVDLKDKWKTLV) is a DNA-binding region (H-T-H motif).

In terms of assembly, homomultimer. Interacts with SNL1 (via PAH2). Interacts with STO. In terms of tissue distribution, expressed ubiquitously. Highest expression in flowers and roots.

It is found in the nucleus. In terms of biological role, binds specifically to the plant telomeric double-stranded DNA sequences 5'-TTTAGGG-3'. At least 2 repeats of telomeric sequences are required for binding. Induces DNA bending. The protein is Telomere repeat-binding protein 4 (TRP4) of Arabidopsis thaliana (Mouse-ear cress).